A 597-amino-acid polypeptide reads, in one-letter code: Medium/long-chain-fatty-acid--CoA ligase FadD6 (597 aa).

It belongs to the ATP-dependent AMP-binding enzyme family.

It catalyses the reaction a medium-chain fatty acid + ATP + CoA = a medium-chain fatty acyl-CoA + AMP + diphosphate. It carries out the reaction a long-chain fatty acid + ATP + CoA = a long-chain fatty acyl-CoA + AMP + diphosphate. The enzyme catalyses hexanoate + ATP + CoA = hexanoyl-CoA + AMP + diphosphate. The catalysed reaction is octanoate + ATP + CoA = octanoyl-CoA + AMP + diphosphate. It catalyses the reaction decanoate + ATP + CoA = decanoyl-CoA + AMP + diphosphate. It carries out the reaction dodecanoate + ATP + CoA = dodecanoyl-CoA + AMP + diphosphate. The enzyme catalyses tetradecanoate + ATP + CoA = tetradecanoyl-CoA + AMP + diphosphate. The catalysed reaction is hexadecanoate + ATP + CoA = hexadecanoyl-CoA + AMP + diphosphate. It catalyses the reaction octadecanoate + ATP + CoA = octadecanoyl-CoA + AMP + diphosphate. It carries out the reaction 9-decenoate + ATP + CoA = 9-decenoyl-CoA + AMP + diphosphate. The enzyme catalyses (9Z)-octadecenoate + ATP + CoA = (9Z)-octadecenoyl-CoA + AMP + diphosphate. The catalysed reaction is 2-hydroxyhexadecanoate + ATP + CoA = 2-hydroxyhexadecanoyl-CoA + AMP + diphosphate. It catalyses the reaction 3-hydroxytetradecanoate + ATP + CoA = 3-hydroxytetradecanoyl-CoA + AMP + diphosphate. It carries out the reaction 12-hydroxyoctadecanoate + ATP + CoA = 12-hydroxyoctadecanoyl-CoA + AMP + diphosphate. The enzyme catalyses 15-hydroxypentadecanoate + ATP + CoA = 15-hydroxypentadecanoyl-CoA + AMP + diphosphate. The catalysed reaction is 16-hydroxyhexadecanoate + ATP + CoA = 16-hydroxyhexadecanoyl-CoA + AMP + diphosphate. It catalyses the reaction 2-methylhexadecanoate + ATP + CoA = 2-methylhexadecanoyl-CoA + AMP + diphosphate. It carries out the reaction 3-methylundecanoate + ATP + CoA = 3-methylundecanoyl-CoA + AMP + diphosphate. The enzyme catalyses 12-methyltridecanoate + ATP + CoA = 12-methyltridecanoyl-CoA + AMP + diphosphate. The catalysed reaction is 12-methyloctadecanoate + ATP + CoA = 12-methyloctadecanoyl-CoA + AMP + diphosphate. In terms of biological role, catalyzes the activation of medium/long-chain fatty acids as acyl-coenzyme A (acyl-CoA). May play a role in the uptake of fatty acids by trapping them metabolically as CoA esters. May also play an important role in the channeling of fatty acids into triacylglycerol (TAG) for use by Mycobacterium during its dormancy. The sequence is that of Medium/long-chain-fatty-acid--CoA ligase FadD6 from Mycobacterium tuberculosis (strain ATCC 25618 / H37Rv).